The chain runs to 491 residues: Cytochrome P450 2C40 (491 aa).

The signal sequence occupies residues 1 to 25 (MDPFVVLVLCLSFLLVLSLWRQRSA). A heme-binding site is contributed by Cys435.

Belongs to the cytochrome P450 family. The cofactor is heme. As to expression, liver, brain, kidney, and intestine, with trace amounts in lung and heart. Expressed throughout the intestinal tract, with higher expression levels in jejunum, cecum and colon.

The protein localises to the endoplasmic reticulum membrane. It is found in the microsome membrane. The enzyme catalyses (5Z,8Z,11Z,14Z)-eicosatetraenoate + reduced [NADPH--hemoprotein reductase] + O2 = 16(R)-hydroxy-(5Z,8Z,11Z,14Z)-eicosatetraenoate + oxidized [NADPH--hemoprotein reductase] + H2O + H(+). It carries out the reaction (5Z,8Z,11Z,14Z)-eicosatetraenoate + reduced [NADPH--hemoprotein reductase] + O2 = 16(S)-hydroxy-(5Z,8Z,11Z,14Z)-eicosatetraenoate + oxidized [NADPH--hemoprotein reductase] + H2O + H(+). It catalyses the reaction (5Z,8Z,11Z,14Z)-eicosatetraenoate + reduced [NADPH--hemoprotein reductase] + O2 = (14R,15S)-epoxy-(5Z,8Z,11Z)-eicosatrienoate + oxidized [NADPH--hemoprotein reductase] + H2O + H(+). The catalysed reaction is (5Z,8Z,11Z,14Z)-eicosatetraenoate + reduced [NADPH--hemoprotein reductase] + O2 = (14S,15R)-epoxy-(5Z,8Z,11Z)-eicosatrienoate + oxidized [NADPH--hemoprotein reductase] + H2O + H(+). The protein operates within lipid metabolism; arachidonate metabolism. In terms of biological role, a cytochrome P450 monooxygenase that may play a major role in the metabolism of arachidonic acid in the intestinal tract. Exhibits regioselective hydroxylase and epoxidase activity toward arachidonic acid, producing 16(R)-hydroxyeicosatetraenoic acid (HETE) and (14R,15S)-epoxyeicosatrienoic acid (EpETrE) as major products. Mechanistically, uses molecular oxygen inserting one oxygen atom into a substrate, and reducing the second into a water molecule, with two electrons provided by NADPH via cytochrome P450 reductase (CPR; NADPH-ferrihemoprotein reductase). This chain is Cytochrome P450 2C40, found in Mus musculus (Mouse).